We begin with the raw amino-acid sequence, 205 residues long: Adenylyl-sulfate kinase (205 aa).

An ATP-binding site is contributed by 31-38; that stretch reads GLSGAGKS. The active-site Phosphoserine intermediate is serine 105.

The protein belongs to the APS kinase family.

It carries out the reaction adenosine 5'-phosphosulfate + ATP = 3'-phosphoadenylyl sulfate + ADP + H(+). Its pathway is sulfur metabolism; hydrogen sulfide biosynthesis; sulfite from sulfate: step 2/3. Its function is as follows. Catalyzes the synthesis of activated sulfate. The polypeptide is Adenylyl-sulfate kinase (Shewanella putrefaciens (strain CN-32 / ATCC BAA-453)).